Reading from the N-terminus, the 484-residue chain is tRNA sulfurtransferase (484 aa).

A THUMP domain is found at 63-167 (ANLILLLSST…NEKLFFIDKK (105 aa)). Residues 185 to 186 (LI), K267, G289, and Q298 contribute to the ATP site. A disulfide bridge links C346 with C458. In terms of domain architecture, Rhodanese spans 406-484 (FAENEIVLDI…GFDNVKVYRP (79 aa)). C458 acts as the Cysteine persulfide intermediate in catalysis.

This sequence belongs to the ThiI family.

The protein resides in the cytoplasm. It carries out the reaction [ThiI sulfur-carrier protein]-S-sulfanyl-L-cysteine + a uridine in tRNA + 2 reduced [2Fe-2S]-[ferredoxin] + ATP + H(+) = [ThiI sulfur-carrier protein]-L-cysteine + a 4-thiouridine in tRNA + 2 oxidized [2Fe-2S]-[ferredoxin] + AMP + diphosphate. The enzyme catalyses [ThiS sulfur-carrier protein]-C-terminal Gly-Gly-AMP + S-sulfanyl-L-cysteinyl-[cysteine desulfurase] + AH2 = [ThiS sulfur-carrier protein]-C-terminal-Gly-aminoethanethioate + L-cysteinyl-[cysteine desulfurase] + A + AMP + 2 H(+). The protein operates within cofactor biosynthesis; thiamine diphosphate biosynthesis. In terms of biological role, catalyzes the ATP-dependent transfer of a sulfur to tRNA to produce 4-thiouridine in position 8 of tRNAs, which functions as a near-UV photosensor. Also catalyzes the transfer of sulfur to the sulfur carrier protein ThiS, forming ThiS-thiocarboxylate. This is a step in the synthesis of thiazole, in the thiamine biosynthesis pathway. The sulfur is donated as persulfide by IscS. The sequence is that of tRNA sulfurtransferase from Psychromonas ingrahamii (strain DSM 17664 / CCUG 51855 / 37).